A 399-amino-acid chain; its full sequence is Probable sugar efflux transporter (399 aa).

Transmembrane regions (helical) follow at residues 15 to 35 (VVTL…PVGL), 50 to 70 (VGMM…PFML), 81 to 101 (LIGL…AWSF), 103 to 123 (VLVI…SITS), 136 to 156 (AQAL…GIPI), 168 to 188 (MTFL…VKLL), 209 to 229 (PALV…YTAY), 246 to 266 (FATV…ILFG), 273 to 293 (ASGL…LLLP), 301 to 321 (LMLL…GMQV), 333 to 353 (VAMS…ALVG), and 364 to 384 (SIGY…LMIF).

It belongs to the major facilitator superfamily. SotB (TC 2.A.1.2) family.

It localises to the cell inner membrane. Its function is as follows. Involved in the efflux of sugars. The physiological role may be the reduction of the intracellular concentration of toxic sugars or sugar metabolites. This chain is Probable sugar efflux transporter, found in Klebsiella pneumoniae (strain 342).